Reading from the N-terminus, the 156-residue chain is Large ribosomal subunit protein uL30 (156 aa).

Belongs to the universal ribosomal protein uL30 family. As to quaternary structure, part of the 50S ribosomal subunit.

The chain is Large ribosomal subunit protein uL30 from Thermofilum pendens (strain DSM 2475 / Hrk 5).